A 501-amino-acid polypeptide reads, in one-letter code: 5-beta-cholestane-3-alpha,7-alpha-diol 12-alpha-hydroxylase (501 aa).

Residues 1–21 (MVLWGPVLGVLLVAIVGYLCL) traverse the membrane as a helical segment. Residue serine 326 is modified to Phosphoserine. Cysteine 440 lines the heme pocket.

The protein belongs to the cytochrome P450 family. Requires heme as cofactor.

Its subcellular location is the endoplasmic reticulum membrane. The protein localises to the microsome membrane. The catalysed reaction is 7alpha-hydroxycholest-4-en-3-one + reduced [NADPH--hemoprotein reductase] + O2 = 7alpha,12alpha-dihydroxycholest-4-en-3-one + oxidized [NADPH--hemoprotein reductase] + H2O + H(+). It catalyses the reaction 5beta-cholestane-3alpha,7alpha-diol + reduced [NADPH--hemoprotein reductase] + O2 = 5beta-cholestane-3alpha,7alpha,12alpha-triol + oxidized [NADPH--hemoprotein reductase] + H2O + H(+). The enzyme catalyses chenodeoxycholate + reduced [NADPH--hemoprotein reductase] + O2 = cholate + oxidized [NADPH--hemoprotein reductase] + H2O + H(+). It functions in the pathway lipid metabolism; bile acid biosynthesis. In terms of biological role, a cytochrome P450 monooxygenase involved in primary bile acid biosynthesis. Catalyzes the 12alpha-hydroxylation of 7alpha-hydroxy-4-cholesten-3-one, an intermediate metabolite in cholic acid biosynthesis. Controls biliary balance of cholic acid and chenodeoxycholic acid, ultimately regulating the intestinal absorption of dietary lipids. Mechanistically, uses molecular oxygen inserting one oxygen atom into a substrate, and reducing the second into a water molecule, with two electrons provided by NADPH via cytochrome P450 reductase (CPR; NADPH--hemoprotein reductase). The polypeptide is 5-beta-cholestane-3-alpha,7-alpha-diol 12-alpha-hydroxylase (CYP8B1) (Sus scrofa (Pig)).